A 523-amino-acid polypeptide reads, in one-letter code: 2-isopropylmalate synthase (523 aa).

Positions 5–267 (VIIFDTTLRD…HTNINHHEIW (263 aa)) constitute a Pyruvate carboxyltransferase domain. Mn(2+) contacts are provided by aspartate 14, histidine 202, histidine 204, and asparagine 238. The regulatory domain stretch occupies residues 392 to 523 (RLDYFNVQSG…QNKENNKETV (132 aa)).

Belongs to the alpha-IPM synthase/homocitrate synthase family. LeuA type 1 subfamily. In terms of assembly, homodimer. Requires Mn(2+) as cofactor.

The protein localises to the cytoplasm. The catalysed reaction is 3-methyl-2-oxobutanoate + acetyl-CoA + H2O = (2S)-2-isopropylmalate + CoA + H(+). The protein operates within amino-acid biosynthesis; L-leucine biosynthesis; L-leucine from 3-methyl-2-oxobutanoate: step 1/4. In terms of biological role, catalyzes the condensation of the acetyl group of acetyl-CoA with 3-methyl-2-oxobutanoate (2-ketoisovalerate) to form 3-carboxy-3-hydroxy-4-methylpentanoate (2-isopropylmalate). This Klebsiella pneumoniae subsp. pneumoniae (strain ATCC 700721 / MGH 78578) protein is 2-isopropylmalate synthase.